We begin with the raw amino-acid sequence, 224 residues long: Flagellar L-ring protein (224 aa).

A signal peptide spans 1–15 (MIKYIALASVVLLVG). C16 carries N-palmitoyl cysteine lipidation. C16 carries the S-diacylglycerol cysteine lipid modification.

It belongs to the FlgH family. As to quaternary structure, the basal body constitutes a major portion of the flagellar organelle and consists of four rings (L,P,S, and M) mounted on a central rod.

Its subcellular location is the cell outer membrane. It is found in the bacterial flagellum basal body. Its function is as follows. Assembles around the rod to form the L-ring and probably protects the motor/basal body from shearing forces during rotation. The chain is Flagellar L-ring protein from Shewanella frigidimarina (strain NCIMB 400).